A 281-amino-acid polypeptide reads, in one-letter code: NAD kinase (281 aa).

The Proton acceptor role is filled by Asp-61. NAD(+) is bound by residues Asp-61–Gly-62, Asn-134–Asp-135, Arg-145, Asp-164, Thr-175–Ser-180, and Gln-234.

It belongs to the NAD kinase family. It depends on a divalent metal cation as a cofactor.

It is found in the cytoplasm. It carries out the reaction NAD(+) + ATP = ADP + NADP(+) + H(+). Functionally, involved in the regulation of the intracellular balance of NAD and NADP, and is a key enzyme in the biosynthesis of NADP. Catalyzes specifically the phosphorylation on 2'-hydroxyl of the adenosine moiety of NAD to yield NADP. The chain is NAD kinase from Clostridium botulinum (strain ATCC 19397 / Type A).